Reading from the N-terminus, the 308-residue chain is uncharacterized protein (308 aa).

In terms of domain architecture, ABC transporter spans Leu5–Leu236. Residue Gly38–Ser45 coordinates ATP.

It belongs to the ABC transporter superfamily.

This is an uncharacterized protein from Escherichia coli (strain K12).